An 886-amino-acid chain; its full sequence is Alanine--tRNA ligase (886 aa).

His-564, His-568, Cys-666, and His-670 together coordinate Zn(2+).

Belongs to the class-II aminoacyl-tRNA synthetase family. It depends on Zn(2+) as a cofactor.

Its subcellular location is the cytoplasm. The enzyme catalyses tRNA(Ala) + L-alanine + ATP = L-alanyl-tRNA(Ala) + AMP + diphosphate. Catalyzes the attachment of alanine to tRNA(Ala) in a two-step reaction: alanine is first activated by ATP to form Ala-AMP and then transferred to the acceptor end of tRNA(Ala). Also edits incorrectly charged Ser-tRNA(Ala) and Gly-tRNA(Ala) via its editing domain. In Prochlorococcus marinus subsp. pastoris (strain CCMP1986 / NIES-2087 / MED4), this protein is Alanine--tRNA ligase.